The chain runs to 375 residues: Acetylornithine aminotransferase (375 aa).

Residues 93-94 (GT) and Phe120 each bind pyridoxal 5'-phosphate. Residue Arg123 participates in N(2)-acetyl-L-ornithine binding. A pyridoxal 5'-phosphate-binding site is contributed by 205 to 208 (DEVQ). Position 234 is an N6-(pyridoxal phosphate)lysine (Lys234). Thr262 contributes to the N(2)-acetyl-L-ornithine binding site. Thr263 contacts pyridoxal 5'-phosphate.

It belongs to the class-III pyridoxal-phosphate-dependent aminotransferase family. ArgD subfamily. As to quaternary structure, homodimer. Pyridoxal 5'-phosphate is required as a cofactor.

It is found in the cytoplasm. The catalysed reaction is N(2)-acetyl-L-ornithine + 2-oxoglutarate = N-acetyl-L-glutamate 5-semialdehyde + L-glutamate. It functions in the pathway amino-acid biosynthesis; L-arginine biosynthesis; N(2)-acetyl-L-ornithine from L-glutamate: step 4/4. The chain is Acetylornithine aminotransferase from Staphylococcus epidermidis (strain ATCC 12228 / FDA PCI 1200).